A 175-amino-acid polypeptide reads, in one-letter code: Photosynthetic NDH subunit of subcomplex B 4, chloroplastic (175 aa).

Residues Met1 to Lys24 constitute a chloroplast transit peptide. Residues Val95–Gly111 form a helical membrane-spanning segment.

In terms of assembly, part of the chloroplast NDH complex, composed of a mixture of chloroplast and nucleus encoded subunits. Component of the NDH subcomplex B, at least composed of PnsB1, PnsB2, PnsB3, PnsB4 and PnsB5.

It localises to the plastid. It is found in the chloroplast thylakoid membrane. Its function is as follows. NDH shuttles electrons from NAD(P)H:plastoquinone, via FMN and iron-sulfur (Fe-S) centers, to quinones in the photosynthetic chain and possibly in a chloroplast respiratory chain. The immediate electron acceptor for the enzyme in this species is believed to be plastoquinone. Couples the redox reaction to proton translocation, and thus conserves the redox energy in a proton gradient. In Arabidopsis thaliana (Mouse-ear cress), this protein is Photosynthetic NDH subunit of subcomplex B 4, chloroplastic.